Reading from the N-terminus, the 204-residue chain is Urease accessory protein UreG (204 aa).

12–19 provides a ligand contact to GTP; sequence GPVGSGKT.

This sequence belongs to the SIMIBI class G3E GTPase family. UreG subfamily. Homodimer. UreD, UreF and UreG form a complex that acts as a GTP-hydrolysis-dependent molecular chaperone, activating the urease apoprotein by helping to assemble the nickel containing metallocenter of UreC. The UreE protein probably delivers the nickel.

The protein localises to the cytoplasm. Facilitates the functional incorporation of the urease nickel metallocenter. This process requires GTP hydrolysis, probably effectuated by UreG. The protein is Urease accessory protein UreG of Pseudomonas paraeruginosa (strain DSM 24068 / PA7) (Pseudomonas aeruginosa (strain PA7)).